The primary structure comprises 245 residues: MIIPALDLIDGNVVRLHQGDYGQQRDYGNDPLLRLQDYQQQGAQVLHLVDLTGAKDPTARQIPLLRKLLAGVNVPVQVGGGIRNEQDVAALLEAGATRVVIGSTAVKQPQLVQGWFERYGADAMVLALDVRIDADGTKRVAISGWQENSDATLEQVVEQFLPYGLKHVLCTDISRDGTLAGSNVALYQEISQRYPQIAFQASGGIGNLDDIAQLRGSGVEGVIVGRALLEGKFSVEEAIACWQNG.

The active-site Proton acceptor is the Asp-7. Asp-129 (proton donor) is an active-site residue.

This sequence belongs to the HisA/HisF family.

It is found in the cytoplasm. The enzyme catalyses 1-(5-phospho-beta-D-ribosyl)-5-[(5-phospho-beta-D-ribosylamino)methylideneamino]imidazole-4-carboxamide = 5-[(5-phospho-1-deoxy-D-ribulos-1-ylimino)methylamino]-1-(5-phospho-beta-D-ribosyl)imidazole-4-carboxamide. It functions in the pathway amino-acid biosynthesis; L-histidine biosynthesis; L-histidine from 5-phospho-alpha-D-ribose 1-diphosphate: step 4/9. The polypeptide is 1-(5-phosphoribosyl)-5-[(5-phosphoribosylamino)methylideneamino] imidazole-4-carboxamide isomerase (Serratia proteamaculans (strain 568)).